Here is a 185-residue protein sequence, read N- to C-terminus: Ribosome-recycling factor (185 aa).

This sequence belongs to the RRF family.

The protein resides in the cytoplasm. Its function is as follows. Responsible for the release of ribosomes from messenger RNA at the termination of protein biosynthesis. May increase the efficiency of translation by recycling ribosomes from one round of translation to another. This chain is Ribosome-recycling factor, found in Beutenbergia cavernae (strain ATCC BAA-8 / DSM 12333 / CCUG 43141 / JCM 11478 / NBRC 16432 / NCIMB 13614 / HKI 0122).